Consider the following 411-residue polypeptide: Phospholipase ABHD3 (411 aa).

Residues Val-25–Ala-45 traverse the membrane as a helical; Signal-anchor for type II membrane protein segment. Residues Pro-140–Val-247 enclose the AB hydrolase-1 domain. Residues Ser-220, Asp-346, and His-375 each act as charge relay system in the active site.

This sequence belongs to the AB hydrolase superfamily. AB hydrolase 4 family.

The protein localises to the membrane. The catalysed reaction is a 1,2-diacyl-sn-glycero-3-phosphocholine + H2O = a 1-acyl-sn-glycero-3-phosphocholine + a fatty acid + H(+). It catalyses the reaction a 1,2-diacyl-sn-glycero-3-phosphocholine + H2O = a 2-acyl-sn-glycero-3-phosphocholine + a fatty acid + H(+). The enzyme catalyses 1-tetradecanoyl-2-(9Z,12Z-octadecadienoyl)-sn-glycero-3-phosphocholine + H2O = 2-(9Z,12Z-octadecadienoyl)-sn-glycero-3-phosphocholine + tetradecanoate + H(+). It carries out the reaction 1-tetradecanoyl-2-(9Z,12Z-octadecadienoyl)-sn-glycero-3-phosphocholine + H2O = 1-tetradecanoyl-sn-glycero-3-phosphocholine + (9Z,12Z)-octadecadienoate + H(+). The catalysed reaction is 1-tetradecanoyl-2-(5Z,8Z,11Z,14Z-eicosatetraenoyl)-sn-glycero-3-phosphocholine + H2O = 2-(5Z,8Z,11Z,14Z)-eicosatetraenoyl-sn-glycero-3-phosphocholine + tetradecanoate + H(+). It catalyses the reaction 1-tetradecanoyl-2-(4Z,7Z,10Z,13Z,16Z,19Z-docosahexaenoyl)-sn-glycero-3-phosphocholine + H2O = 2-(4Z,7Z,10Z,13Z,16Z,19Z-docosahexaenoyl)-sn-glycero-3-phosphocholine + tetradecanoate + H(+). The enzyme catalyses 1,2-ditetradecanoyl-sn-glycero-3-phosphocholine + H2O = 2-tetradecanoyl-sn-glycero-3-phosphocholine + tetradecanoate + H(+). It carries out the reaction 1-octadecanoyl-2-acetyl-sn-glycero-3-phosphocholine + H2O = 1-octadecanoyl-sn-glycero-3-phosphocholine + acetate + H(+). The catalysed reaction is 1,2-ditetradecanoyl-sn-glycero-3-phosphocholine + H2O = 1-tetradecanoyl-sn-glycero-3-phosphocholine + tetradecanoate + H(+). It catalyses the reaction 1-octadecanoyl-2-pentanoyl-sn-glycero-3-phosphocholine + H2O = pentanoate + 1-octadecanoyl-sn-glycero-3-phosphocholine + H(+). The enzyme catalyses 1-octadecanoyl-2-hexanoyl-sn-glycero-3-phosphocholine + H2O = hexanoate + 1-octadecanoyl-sn-glycero-3-phosphocholine + H(+). It carries out the reaction 1-octadecanoyl-2-octanoyl-sn-glycero-3-phosphocholine + H2O = 1-octadecanoyl-sn-glycero-3-phosphocholine + octanoate + H(+). The catalysed reaction is 1-octadecanoyl-2-nonanoyl-sn-glycero-3-phosphocholine + H2O = nonanoate + 1-octadecanoyl-sn-glycero-3-phosphocholine + H(+). It catalyses the reaction 1-O-hexadecyl-2-nonadioyl-sn-glycero-3-phosphocholine + H2O = nonanedioate + 1-O-hexadecyl-sn-glycero-3-phosphocholine + H(+). The enzyme catalyses 1-hexadecanoyl-2-nonadioyl-sn-glycero-3-phosphocholine + H2O = nonanedioate + 1-hexadecanoyl-sn-glycero-3-phosphocholine + H(+). It carries out the reaction 1-hexadecanoyl-2-(9-oxononanoyl)-sn-glycero-3-phosphocholine + H2O = 9-oxononanoate + 1-hexadecanoyl-sn-glycero-3-phosphocholine + H(+). The catalysed reaction is 1-hexadecanoyl-2-(5-oxopentanoyl)-sn-glycero-3-phosphocholine + H2O = 5-oxopentanoate + 1-hexadecanoyl-sn-glycero-3-phosphocholine + H(+). It catalyses the reaction 1-hexadecanoyl-2-glutaroyl-sn-glycero-3-phosphocholine + H2O = glutarate + 1-hexadecanoyl-sn-glycero-3-phosphocholine + H(+). The enzyme catalyses 1-O-hexadecyl-2-acetyl-sn-glycero-3-phosphocholine + H2O = 1-O-hexadecyl-sn-glycero-3-phosphocholine + acetate + H(+). Phospholipase that may play a role in phospholipids remodeling. May selectively cleave myristate (C14)-containing phosphatidylcholines through its predominant phospholipase 1 activity, cleaving preferentially acyl groups in sn1 position. In parallel, may have a minor phospholipase 2 activity acting on acyl groups in position sn2. In addition to (C14)-containing phosphatidylcholines, may also act on other medium-chain-containing and oxidatively truncated phospholipids. In Bos taurus (Bovine), this protein is Phospholipase ABHD3.